The sequence spans 1749 residues: E3 ubiquitin-protein ligase UBR1 (1749 aa).

Alanine 2 carries the post-translational modification N-acetylalanine. The residue at position 21 (threonine 21) is a Phosphothreonine. A UBR-type zinc finger spans residues 97 to 168; sequence QLCGRVFKSG…TGPFCVNHEP (72 aa). Residues cysteine 99, cysteine 112, cysteine 115, cysteine 124, cysteine 127, histidine 133, and histidine 136 each contribute to the Zn(2+) site. Phenylalanine 148 contributes to the a peptide binding site. Residue cysteine 149 coordinates Zn(2+). A peptide is bound at residue aspartate 150. Cysteine 151 contributes to the Zn(2+) binding site. Residue aspartate 153 coordinates a peptide. 2 residues coordinate Zn(2+): cysteine 163 and histidine 166. The tract at residues 842 to 868 is disordered; sequence QHSKAEHMQKKRRKQENKDEALPPPPP. Residues 1019 to 1054 form a UBC2-binding region (U2BR) region; it reads RKRKAEAARLHRQKIMAQMSALQKNFIETHKLMYDN. 6 residues coordinate Zn(2+): cysteine 1098, cysteine 1101, cysteine 1159, histidine 1161, histidine 1164, and cysteine 1167. An RING-type; atypical zinc finger spans residues 1098–1201; the sequence is CILCQEEQEV…SGEYLCPLCK (104 aa). Phosphoserine is present on serine 1179. Residues cysteine 1197, cysteine 1200, cysteine 1627, cysteine 1630, and cysteine 1653 each contribute to the Zn(2+) site.

The protein belongs to the E3 ubiquitin-protein ligase UBR1-like family. In terms of assembly, interacts with RECQL4. As to expression, broadly expressed, with highest levels in skeletal muscle, kidney and pancreas. Present in acinar cells of the pancreas (at protein level).

It is found in the cytoplasm. The protein localises to the cytosol. The catalysed reaction is S-ubiquitinyl-[E2 ubiquitin-conjugating enzyme]-L-cysteine + [acceptor protein]-L-lysine = [E2 ubiquitin-conjugating enzyme]-L-cysteine + N(6)-ubiquitinyl-[acceptor protein]-L-lysine.. The protein operates within protein modification; protein ubiquitination. Inhibited by the small-molecule compound RF-C11, which bears two heterovalent ligands: RF-C11 inhibits activity toward both type-1 and type-2 N-degrons. Its function is as follows. E3 ubiquitin-protein ligase which is a component of the N-end rule pathway. Recognizes and binds proteins bearing specific N-terminal residues that are destabilizing according to the N-end rule, leading to their ubiquitination and subsequent degradation. Recognizes both type-1 and type-2 N-degrons, containing positively charged amino acids (Arg, Lys and His) and bulky and hydrophobic amino acids, respectively. Does not ubiquitinate proteins that are acetylated at the N-terminus. In contrast, it strongly binds methylated N-degrons. Binds leucine and is a negative regulator of the leucine-mTOR signaling pathway, thereby controlling cell growth. The polypeptide is E3 ubiquitin-protein ligase UBR1 (Homo sapiens (Human)).